The sequence spans 20 residues: Unknown protein NF015 from 2D-PAGE (20 aa).

The tract at residues Thr-1–Glu-20 is disordered.

This Naegleria fowleri (Brain eating amoeba) protein is Unknown protein NF015 from 2D-PAGE.